The following is a 352-amino-acid chain: Ketoisovalerate oxidoreductase subunit VorB (352 aa).

As to quaternary structure, heterotrimer of the VorA, VorB and VorC subunits.

The enzyme catalyses 3-methyl-2-oxobutanoate + 2 oxidized [2Fe-2S]-[ferredoxin] + CoA = 2-methylpropanoyl-CoA + 2 reduced [2Fe-2S]-[ferredoxin] + CO2 + H(+). This is Ketoisovalerate oxidoreductase subunit VorB (vorB) from Methanothermobacter thermautotrophicus (strain ATCC 29096 / DSM 1053 / JCM 10044 / NBRC 100330 / Delta H) (Methanobacterium thermoautotrophicum).